Here is a 433-residue protein sequence, read N- to C-terminus: Chitinase-like protein EN03 (433 aa).

The N-terminal stretch at 1–16 is a signal peptide; that stretch reads MKLFIALVGLLALAKA. The region spanning 23 to 433 is the GH18 domain; it reads SKVLCYYDSR…PILRAAKYRL (411 aa). A disulfide bridge links Cys27 with Cys54. N-linked (GlcNAc...) asparagine glycosylation is present at Asn220. A disulfide bond links Cys337 and Cys418.

The protein belongs to the glycosyl hydrolase 18 family. IDGF subfamily.

It localises to the secreted. In Bombyx mori (Silk moth), this protein is Chitinase-like protein EN03.